Consider the following 336-residue polypeptide: Biotin synthase (336 aa).

The Radical SAM core domain maps to 57–286 (HHGKSIDLCS…RAIVRTAGGR (230 aa)). Cys75, Cys79, and Cys82 together coordinate [4Fe-4S] cluster. Ser119, Cys151, Cys211, and Arg281 together coordinate [2Fe-2S] cluster.

The protein belongs to the radical SAM superfamily. Biotin synthase family. Homodimer. [4Fe-4S] cluster is required as a cofactor. It depends on [2Fe-2S] cluster as a cofactor.

The catalysed reaction is (4R,5S)-dethiobiotin + (sulfur carrier)-SH + 2 reduced [2Fe-2S]-[ferredoxin] + 2 S-adenosyl-L-methionine = (sulfur carrier)-H + biotin + 2 5'-deoxyadenosine + 2 L-methionine + 2 oxidized [2Fe-2S]-[ferredoxin]. It participates in cofactor biosynthesis; biotin biosynthesis; biotin from 7,8-diaminononanoate: step 2/2. Functionally, catalyzes the conversion of dethiobiotin (DTB) to biotin by the insertion of a sulfur atom into dethiobiotin via a radical-based mechanism. The protein is Biotin synthase of Desulfotalea psychrophila (strain LSv54 / DSM 12343).